The sequence spans 2705 residues: Teneurin-1 (2705 aa).

2 disordered regions span residues 1 to 73 (MEQM…STQD) and 135 to 222 (CLSS…TQDS). The Teneurin N-terminal domain occupies 1–299 (MEQMDCKPYQ…KPYRCCNWKC (299 aa)). The Cytoplasmic segment spans residues 1–305 (MEQMDCKPYQ…NWKCTALSAT (305 aa)). A compositionally biased stretch (basic and acidic residues) spans 32 to 46 (DGRKQRQSYDSRETL). A Nuclear localization signal (NLS) motif is present at residues 62 to 65 (RKRK). A compositionally biased stretch (polar residues) spans 135–147 (CLSSRANSALSLT). Positions 148-157 (DTDHERKSDG) are enriched in basic and acidic residues. The segment covering 173–182 (PLPPPPPPPH) has biased composition (pro residues). The short motif at 271-278 (PPPRPLPR) is the Required for interaction with SORBS1 (Ten-1 ICD form) element. Residues 306-326 (AITVTLALLLAYVIAVHLFGL) traverse the membrane as a helical segment. Topologically, residues 327–2705 (TWQLQPVEGQ…FMRQSEIGRR (2379 aa)) are extracellular. Asn-414 carries N-linked (GlcNAc...) asparagine glycosylation. EGF-like domains lie at 509–540 (VLDD…PDCA), 541–572 (KDSC…ECDV), 573–605 (PEEQ…EICE), 606–638 (EEDC…NCET), 639–672 (SLPI…SDCS), 673–702 (TELC…GPTC), 703–734 (EERT…DHCT), and 735–769 (IDGC…SGCN). Disulfide bonds link Cys-513–Cys-523, Cys-517–Cys-528, Cys-530–Cys-539, Cys-548–Cys-559, Cys-561–Cys-570, Cys-577–Cys-588, Cys-582–Cys-593, Cys-595–Cys-604, Cys-609–Cys-620, Cys-614–Cys-625, Cys-627–Cys-636, Cys-647–Cys-660, Cys-662–Cys-671, Cys-676–Cys-686, Cys-680–Cys-691, Cys-693–Cys-702, Cys-707–Cys-717, Cys-711–Cys-722, Cys-724–Cys-733, Cys-738–Cys-748, Cys-742–Cys-757, and Cys-759–Cys-768. Asn-878 and Asn-1057 each carry an N-linked (GlcNAc...) asparagine glycan. 5 NHL repeats span residues 1167–1192 (LFAP…VRRI), 1202–1246 (LELR…AKSL), 1272–1316 (SHCG…NGMI), 1331–1382 (LSCD…IAGR), and 1461–1504 (CFSG…VSRN). One copy of the YD 1 repeat lies at 1514–1533 (YEIASPADQELYQFTINGTH). N-linked (GlcNAc...) asparagine glycans are attached at residues Asn-1530 and Asn-1547. 4 YD repeats span residues 1550-1570 (YSGE…VHIR), 1588-1612 (YWLT…ALMT), 1613-1634 (YPGN…TVYE), and 1635-1655 (YDSD…SSFH). N-linked (GlcNAc...) asparagine glycosylation is found at Asn-1643, Asn-1679, Asn-1737, Asn-1761, and Asn-1822. YD repeat units follow at residues 1825–1844 (YSHS…EKME), 1845–1865 (YDPS…WSYT), 1866–1884 (YLEK…YIFE), 1885–1905 (YDQS…HALQ), 1913–1929 (YRNI…FIQD), 1930–1949 (VTRD…RRVL), 1950–1969 (YKYS…TQVT), 1972–1992 (YEES…FICT), 1995–2015 (YRQT…EGLV), 2065–2085 (YDLN…FSAN), and 2093–2113 (YEIL…MGRM). Asn-2125 is a glycosylation site (N-linked (GlcNAc...) asparagine). YD repeat units lie at residues 2133-2153 (YDRD…WRYS), 2154-2174 (YDLN…LTPL), 2176-2196 (YDLR…DEDG), 2208-2228 (YNSN…TVQY), and 2230-2250 (YDGL…LQFF). N-linked (GlcNAc...) asparagine glycosylation is present at Asn-2265. YD repeat units follow at residues 2276–2293 (YDLQ…GEEY) and 2294–2317 (YVAC…IKEI). Asn-2582 is a glycosylation site (N-linked (GlcNAc...) asparagine).

It belongs to the tenascin family. Teneurin subfamily. Homodimer; disulfide-linked. Heterodimer with other teneurins. Ten-1 ICD interacts with SORBS1 (via third SH3 domain). Interacts with MBD1 isoform 2. Post-translationally, derives from the plasma membrane form by proteolytic processing. Further proteolytic cleavage may be generated. In terms of processing, derives from the plasma membrane form by proteolytic cleavage and translocates to the nucleus. In terms of tissue distribution, expressed in the neurons of the developing visual system and in fetal brain.

It is found in the cell membrane. The protein localises to the nucleus. The protein resides in the nucleus speckle. It localises to the nucleus matrix. Its subcellular location is the cytoplasm. It is found in the cytoskeleton. Involved in neural development, regulating the establishment of proper connectivity within the nervous system. May function as a cellular signal transducer. In terms of biological role, plays a role in the regulation of neuroplasticity in the limbic system. Mediates a rapid reorganization of actin- and tubulin-based cytoskeleton elements with an increase in dendritic arborization and spine density formation of neurons in the hippocampus and amygdala. Induces BDNF transcription inhibition in neurons. Activates the mitogen-activated protein (MAP) kinase 2 (MEK2) and extracellular signal-regulated kinase (ERK) cascade. Functionally, induces gene transcription activation. In Gallus gallus (Chicken), this protein is Teneurin-1 (TENM1).